The sequence spans 237 residues: N-demethylindolmycin N-methyltransferase (237 aa).

The protein belongs to the methyltransferase superfamily.

It catalyses the reaction N-demethylindolmycin + S-adenosyl-L-methionine = indolmycin + S-adenosyl-L-homocysteine + H(+). Involved in the biosynthesis of the antibiotic indolmycin, an inhibitor of the bacterial tryptophan-tRNA synthetases. Catalyzes the methylation of N-demethylindolmycin to yield indolmycin, with S-adenosylmethionine (AdoMet) acting as the methyl donor. This is N-demethylindolmycin N-methyltransferase from Streptomyces griseus.